A 148-amino-acid polypeptide reads, in one-letter code: Transcriptional repressor NrdR (148 aa).

A zinc finger spans residues 3–34 (CPFCHNEDTQVLDTRVSDEGDTIRRRRRCAKC). The 91-residue stretch at 49–139 (PAIVKKNGSR…VYRSFADIES (91 aa)) folds into the ATP-cone domain.

This sequence belongs to the NrdR family. It depends on Zn(2+) as a cofactor.

Its function is as follows. Negatively regulates transcription of bacterial ribonucleotide reductase nrd genes and operons by binding to NrdR-boxes. In Polynucleobacter necessarius subsp. necessarius (strain STIR1), this protein is Transcriptional repressor NrdR.